The sequence spans 382 residues: 1-deoxy-D-xylulose 5-phosphate reductoisomerase (382 aa).

Residues Thr10, Gly11, Ser12, Ile13, Gly36, and Asn122 each coordinate NADPH. Lys123 provides a ligand contact to 1-deoxy-D-xylulose 5-phosphate. Glu124 lines the NADPH pocket. Asp148 provides a ligand contact to Mn(2+). Ser149, Glu150, Ser174, and His197 together coordinate 1-deoxy-D-xylulose 5-phosphate. Glu150 serves as a coordination point for Mn(2+). Position 203 (Gly203) interacts with NADPH. 4 residues coordinate 1-deoxy-D-xylulose 5-phosphate: Ser210, Asn215, Lys216, and Glu219. Residue Glu219 coordinates Mn(2+).

It belongs to the DXR family. It depends on Mg(2+) as a cofactor. Requires Mn(2+) as cofactor.

It carries out the reaction 2-C-methyl-D-erythritol 4-phosphate + NADP(+) = 1-deoxy-D-xylulose 5-phosphate + NADPH + H(+). It functions in the pathway isoprenoid biosynthesis; isopentenyl diphosphate biosynthesis via DXP pathway; isopentenyl diphosphate from 1-deoxy-D-xylulose 5-phosphate: step 1/6. Catalyzes the NADPH-dependent rearrangement and reduction of 1-deoxy-D-xylulose-5-phosphate (DXP) to 2-C-methyl-D-erythritol 4-phosphate (MEP). The chain is 1-deoxy-D-xylulose 5-phosphate reductoisomerase from Pelodictyon phaeoclathratiforme (strain DSM 5477 / BU-1).